We begin with the raw amino-acid sequence, 214 residues long: tRNA (guanine-N(7)-)-methyltransferase (214 aa).

S-adenosyl-L-methionine-binding residues include Asp35, Glu60, Asn87, and Asp113. Asp113 is an active-site residue. Positions 117 and 149 each coordinate substrate.

It belongs to the class I-like SAM-binding methyltransferase superfamily. TrmB family.

It catalyses the reaction guanosine(46) in tRNA + S-adenosyl-L-methionine = N(7)-methylguanosine(46) in tRNA + S-adenosyl-L-homocysteine. It participates in tRNA modification; N(7)-methylguanine-tRNA biosynthesis. Catalyzes the formation of N(7)-methylguanine at position 46 (m7G46) in tRNA. The protein is tRNA (guanine-N(7)-)-methyltransferase of Prochlorococcus marinus (strain NATL2A).